Here is a 122-residue protein sequence, read N- to C-terminus: Small ribosomal subunit protein uS12 (122 aa).

Residues 1–45 (MPTTNQLVRKERKRQTKKTATPALQGSPQRRGVCTRVSTTTPKKP) are disordered. Polar residues predominate over residues 18-28 (KTATPALQGSP). Aspartate 89 carries the 3-methylthioaspartic acid modification.

It belongs to the universal ribosomal protein uS12 family. In terms of assembly, part of the 30S ribosomal subunit. Contacts proteins S8 and S17. May interact with IF1 in the 30S initiation complex.

In terms of biological role, with S4 and S5 plays an important role in translational accuracy. Its function is as follows. Interacts with and stabilizes bases of the 16S rRNA that are involved in tRNA selection in the A site and with the mRNA backbone. Located at the interface of the 30S and 50S subunits, it traverses the body of the 30S subunit contacting proteins on the other side and probably holding the rRNA structure together. The combined cluster of proteins S8, S12 and S17 appears to hold together the shoulder and platform of the 30S subunit. The sequence is that of Small ribosomal subunit protein uS12 from Rubrobacter xylanophilus (strain DSM 9941 / JCM 11954 / NBRC 16129 / PRD-1).